The primary structure comprises 145 residues: Ribosome maturation factor RimP (145 aa).

It belongs to the RimP family.

The protein resides in the cytoplasm. In terms of biological role, required for maturation of 30S ribosomal subunits. This is Ribosome maturation factor RimP from Borreliella burgdorferi (strain ATCC 35210 / DSM 4680 / CIP 102532 / B31) (Borrelia burgdorferi).